The chain runs to 176 residues: Flavodoxin-like domain-containing protein BilS (176 aa).

Its pathway is porphyrin-containing compound metabolism; protoheme degradation. Its function is as follows. Together with BilR, catalyzes reduction of mesobilirubin and/or bilirubin to urobilinogen, a key step during heme degradation. BilS is probably involved in electron transfer for the bilirubin reductase BilR. This Clostridioides difficile (strain CD3) protein is Flavodoxin-like domain-containing protein BilS.